Here is a 242-residue protein sequence, read N- to C-terminus: Purine nucleoside phosphorylase PA4543 (242 aa).

H69, C103, and H120 together coordinate Zn(2+).

Belongs to the purine nucleoside phosphorylase YfiH/LACC1 family. In terms of assembly, homodimer. It depends on Cu(2+) as a cofactor. Zn(2+) serves as cofactor.

It catalyses the reaction adenosine + phosphate = alpha-D-ribose 1-phosphate + adenine. The catalysed reaction is S-methyl-5'-thioadenosine + phosphate = 5-(methylsulfanyl)-alpha-D-ribose 1-phosphate + adenine. The enzyme catalyses inosine + phosphate = alpha-D-ribose 1-phosphate + hypoxanthine. It carries out the reaction adenosine + H2O + H(+) = inosine + NH4(+). Purine nucleoside enzyme that catalyzes the phosphorolysis of adenosine and inosine nucleosides, yielding D-ribose 1-phosphate and the respective free bases, adenine and hypoxanthine. Also catalyzes the phosphorolysis of S-methyl-5'-thioadenosine into adenine and S-methyl-5-thio-alpha-D-ribose 1-phosphate. Also has adenosine deaminase activity. The sequence is that of Purine nucleoside phosphorylase PA4543 from Pseudomonas aeruginosa (strain ATCC 15692 / DSM 22644 / CIP 104116 / JCM 14847 / LMG 12228 / 1C / PRS 101 / PAO1).